A 192-amino-acid chain; its full sequence is UPF0301 protein Bmul_2524/BMULJ_00714 (192 aa).

The protein belongs to the UPF0301 (AlgH) family.

The chain is UPF0301 protein Bmul_2524/BMULJ_00714 from Burkholderia multivorans (strain ATCC 17616 / 249).